A 65-amino-acid chain; its full sequence is Large ribosomal subunit protein bL35 (65 aa).

It belongs to the bacterial ribosomal protein bL35 family.

In Agathobacter rectalis (strain ATCC 33656 / DSM 3377 / JCM 17463 / KCTC 5835 / VPI 0990) (Eubacterium rectale), this protein is Large ribosomal subunit protein bL35.